The following is a 188-amino-acid chain: dITP/XTP pyrophosphatase (188 aa).

A substrate-binding site is contributed by 10–15 (TSNPHK). Residues glutamate 39 and aspartate 69 each coordinate Mg(2+). Aspartate 69 functions as the Proton acceptor in the catalytic mechanism. Substrate-binding positions include serine 70, 145–148 (FGFD), lysine 168, and 173–174 (HR).

It belongs to the HAM1 NTPase family. In terms of assembly, homodimer. It depends on Mg(2+) as a cofactor.

It catalyses the reaction XTP + H2O = XMP + diphosphate + H(+). The enzyme catalyses dITP + H2O = dIMP + diphosphate + H(+). It carries out the reaction ITP + H2O = IMP + diphosphate + H(+). Its function is as follows. Pyrophosphatase that catalyzes the hydrolysis of nucleoside triphosphates to their monophosphate derivatives, with a high preference for the non-canonical purine nucleotides XTP (xanthosine triphosphate), dITP (deoxyinosine triphosphate) and ITP. Seems to function as a house-cleaning enzyme that removes non-canonical purine nucleotides from the nucleotide pool, thus preventing their incorporation into DNA/RNA and avoiding chromosomal lesions. The polypeptide is dITP/XTP pyrophosphatase (Ignicoccus hospitalis (strain KIN4/I / DSM 18386 / JCM 14125)).